The primary structure comprises 450 residues: Protein tweety homolog 1 (450 aa).

Residues methionine 1 to alanine 43 lie on the Extracellular side of the membrane. The helical transmembrane segment at leucine 44–valine 64 threads the bilayer. Residues tyrosine 65–glycine 88 lie on the Cytoplasmic side of the membrane. The helical transmembrane segment at cysteine 89–phenylalanine 109 threads the bilayer. The Extracellular portion of the chain corresponds to tyrosine 110–tryptophan 214. Asparagine 130 carries an N-linked (GlcNAc...) asparagine glycan. A helical transmembrane segment spans residues leucine 215 to leucine 235. The Cytoplasmic segment spans residues alanine 236–lysine 240. The helical transmembrane segment at tryptophan 241–methionine 261 threads the bilayer. Residues glycine 262–glutamate 390 lie on the Extracellular side of the membrane. N-linked (GlcNAc...) asparagine glycans are attached at residues asparagine 284 and asparagine 355. Cysteine 303 and cysteine 370 are oxidised to a cystine. Residues glycine 391–cysteine 411 traverse the membrane as a helical segment. The Cytoplasmic segment spans residues serine 412 to isoleucine 450. Positions aspartate 428 to isoleucine 450 are disordered. A Phosphoserine modification is found at serine 440.

It belongs to the tweety family. As to quaternary structure, homotetramer; disulfide-linked. Homodimer. Post-translationally, N-glycosylated. Contains high-mannose, hybrid and complex oligosaccharides.

It is found in the cell membrane. The enzyme catalyses chloride(in) = chloride(out). The catalysed reaction is L-glutamate(out) = L-glutamate(in). Calcium-independent, swelling-dependent volume-regulated anion channel (VRAC-swell) which plays a pivotal role in the process of regulatory volume decrease (RVD) in the brain through the efflux of anions like chloride and organic osmolytes like glutamate. The polypeptide is Protein tweety homolog 1 (TTYH1) (Macaca fascicularis (Crab-eating macaque)).